The chain runs to 133 residues: Ribosome-binding factor A (133 aa).

It belongs to the RbfA family. As to quaternary structure, monomer. Binds 30S ribosomal subunits, but not 50S ribosomal subunits or 70S ribosomes.

The protein localises to the cytoplasm. One of several proteins that assist in the late maturation steps of the functional core of the 30S ribosomal subunit. Associates with free 30S ribosomal subunits (but not with 30S subunits that are part of 70S ribosomes or polysomes). Required for efficient processing of 16S rRNA. May interact with the 5'-terminal helix region of 16S rRNA. The sequence is that of Ribosome-binding factor A from Nostoc sp. (strain PCC 7120 / SAG 25.82 / UTEX 2576).